A 573-amino-acid chain; its full sequence is Anti-Muellerian hormone type-2 receptor (573 aa).

Residues methionine 1–alanine 17 form the signal peptide. The Extracellular segment spans residues proline 18–leucine 149. Intrachain disulfides connect cysteine 55–cysteine 79 and cysteine 92–cysteine 109. Asparagine 66 carries an N-linked (GlcNAc...) asparagine glycan. An N-linked (GlcNAc...) asparagine glycan is attached at asparagine 119. The helical transmembrane segment at valine 150–leucine 170 threads the bilayer. Residues glutamine 171–valine 573 are Cytoplasmic-facing. The Protein kinase domain occupies leucine 203–proline 518. ATP-binding positions include isoleucine 209–valine 217 and lysine 230. Aspartate 333 serves as the catalytic Proton acceptor.

Belongs to the protein kinase superfamily. TKL Ser/Thr protein kinase family. TGFB receptor subfamily. As to quaternary structure, interacts with type I receptor ACVR1. The cofactor is Mg(2+). Mn(2+) is required as a cofactor.

It localises to the membrane. It catalyses the reaction L-threonyl-[receptor-protein] + ATP = O-phospho-L-threonyl-[receptor-protein] + ADP + H(+). The catalysed reaction is L-seryl-[receptor-protein] + ATP = O-phospho-L-seryl-[receptor-protein] + ADP + H(+). Its function is as follows. On ligand binding, forms a receptor complex consisting of two type II and two type I transmembrane serine/threonine kinases. Type II receptors phosphorylate and activate type I receptors which autophosphorylate, then bind and activate SMAD transcriptional regulators. Receptor for anti-Muellerian hormone. In Homo sapiens (Human), this protein is Anti-Muellerian hormone type-2 receptor (AMHR2).